Reading from the N-terminus, the 108-residue chain is Insulin (108 aa).

The signal sequence occupies residues 1–21; that stretch reads MAVWIQAGALLFLLAVSSVNA. 3 disulfides stabilise this stretch: Cys-30–Cys-94, Cys-42–Cys-107, and Cys-93–Cys-98. Positions 54–85 are cleaved as a propeptide — c peptide; that stretch reads DVDPPLGFLPPKSAQETEVADFAFKDHAEVIR.

Belongs to the insulin family. As to quaternary structure, heterodimer of a B chain and an A chain linked by two disulfide bonds.

The protein resides in the secreted. Insulin decreases blood glucose concentration. It increases cell permeability to monosaccharides, amino acids and fatty acids. It accelerates glycolysis, the pentose phosphate cycle, and glycogen synthesis in liver. The protein is Insulin (ins) of Cyprinus carpio (Common carp).